The following is a 483-amino-acid chain: Glucose-1-phosphate adenylyltransferase large subunit 3, chloroplastic/amyloplastic (483 aa).

Belongs to the bacterial/plant glucose-1-phosphate adenylyltransferase family. As to quaternary structure, heterotetramer. Tubers.

The protein resides in the plastid. It is found in the chloroplast. The protein localises to the amyloplast. The catalysed reaction is alpha-D-glucose 1-phosphate + ATP + H(+) = ADP-alpha-D-glucose + diphosphate. It participates in glycan biosynthesis; starch biosynthesis. Its activity is regulated as follows. Activated by 3'phosphoglycerate, inhibited by orthophosphate. Allosteric regulation. In terms of biological role, this protein plays a role in synthesis of starch. It catalyzes the synthesis of the activated glycosyl donor, ADP-glucose from Glc-1-P and ATP. The sequence is that of Glucose-1-phosphate adenylyltransferase large subunit 3, chloroplastic/amyloplastic (AGPS3) from Solanum tuberosum (Potato).